We begin with the raw amino-acid sequence, 432 residues long: Glutamyl-tRNA reductase (432 aa).

Residues 49 to 52, S109, 114 to 116, and Q120 contribute to the substrate site; these read TCNR and EGQ. C50 acts as the Nucleophile in catalysis. 189–194 is an NADP(+) binding site; sequence GAGKMS.

The protein belongs to the glutamyl-tRNA reductase family. As to quaternary structure, homodimer.

The protein localises to the plastid. It localises to the cyanelle. It catalyses the reaction (S)-4-amino-5-oxopentanoate + tRNA(Glu) + NADP(+) = L-glutamyl-tRNA(Glu) + NADPH + H(+). The protein operates within porphyrin-containing compound metabolism; protoporphyrin-IX biosynthesis; 5-aminolevulinate from L-glutamyl-tRNA(Glu): step 1/2. It participates in porphyrin-containing compound metabolism; chlorophyll biosynthesis. Functionally, catalyzes the NADPH-dependent reduction of glutamyl-tRNA(Glu) to glutamate 1-semialdehyde (GSA). The protein is Glutamyl-tRNA reductase of Cyanophora paradoxa.